We begin with the raw amino-acid sequence, 555 residues long: Formate--tetrahydrofolate ligase (555 aa).

Position 65–72 (65–72 (TPAGEGKT)) interacts with ATP.

The protein belongs to the formate--tetrahydrofolate ligase family.

It carries out the reaction (6S)-5,6,7,8-tetrahydrofolate + formate + ATP = (6R)-10-formyltetrahydrofolate + ADP + phosphate. It participates in one-carbon metabolism; tetrahydrofolate interconversion. This Syntrophomonas wolfei subsp. wolfei (strain DSM 2245B / Goettingen) protein is Formate--tetrahydrofolate ligase.